The chain runs to 111 residues: Small ubiquitin-related modifier 3 (111 aa).

A Ubiquitin-like domain is found at 16–93 (AHVILKVKSQ…IDACRAMSGG (78 aa)). Residue glycine 93 forms a Glycyl lysine isopeptide (Gly-Lys) (interchain with K-? in acceptor proteins) linkage.

This sequence belongs to the ubiquitin family. SUMO subfamily. Interacts with SAE2, SCE1, SIZ1 and MMS21. Covalently attached to a number of proteins. Interacts with NPR1; this interaction promotes NPR1 phosphorylation and triggers its sumoylation and subsequent degradation.

The protein resides in the nucleus. Its subcellular location is the cytoplasm. Functionally, ubiquitin-like protein which can be covalently attached to target lysines as a monomer. Does not seem to be involved in protein degradation and may function as an antagonist of ubiquitin in the degradation process. Promotes NPR1 sumoylation to activate defense gene expression and regulate its degradation. This chain is Small ubiquitin-related modifier 3, found in Arabidopsis thaliana (Mouse-ear cress).